Here is a 673-residue protein sequence, read N- to C-terminus: Probable boron transporter 7 (673 aa).

Residues 1–35 (MEGVKFPFGGIINDFNGRRKCYKQDWLAAFNSGVR) are Cytoplasmic-facing. A helical membrane pass occupies residues 36 to 56 (ILAPTLYIFIASALPVIAFGE). The Extracellular portion of the chain corresponds to 57-75 (QLSRETDRSLGIAESLAST). A helical transmembrane segment spans residues 76 to 96 (ALCGIIHSVFGGQPLLIVGVA). The Cytoplasmic segment spans residues 97–121 (EPTIIMYTYLHSFSKSRPELGQKLY). A helical membrane pass occupies residues 122 to 142 (LAWAGWVCVWTAVLLMLLAML). Residues 143-160 (NACNIISRFTRIAGELFG) lie on the Extracellular side of the membrane. Residues 161–181 (MLITVLFIQEAVKGLIGEFLV) form a helical membrane-spanning segment. Over 182–197 (PKSDDPSLEVYQFQWR) the chain is Cytoplasmic. Residues 198–218 (YTNGLLAVIFSFGLLYTALKS) traverse the membrane as a helical segment. At 219-233 (RRARSWKYGFRWMRG) the chain is on the extracellular side. The chain crosses the membrane as a helical span at residues 234–254 (FIGDYGTLLMLVLWSAFSYTV). Residues 255 to 289 (PRNLPEGVPRRLELPLPWASESLYHWTVVKDMAKV) lie on the Cytoplasmic side of the membrane. A helical transmembrane segment spans residues 290–310 (PPLYILAAFIPAIMIAGLYFF). Residues 311–330 (DHCVSAQMAQQKEFNLKNPT) are Extracellular-facing. The chain crosses the membrane as a helical span at residues 331-351 (AYHYDIFILGIMTLICGLLGL). The Cytoplasmic portion of the chain corresponds to 352–468 (PPSNGVIPQS…EQRVSNLLQS (117 aa)). Residues 469–489 (VLVGLLILAVPVLRMIPTSVL) form a helical membrane-spanning segment. Over 490 to 556 (WGYFTYMAVD…QLLYFLICYG (67 aa)) the chain is Extracellular. A helical transmembrane segment spans residues 557-577 (VTWIPVGGILFPLPFFILIAL). Topologically, residues 578 to 673 (RQYILQRLFD…SQMVKIYNHS (96 aa)) are cytoplasmic.

It belongs to the anion exchanger (TC 2.A.31.3) family.

It is found in the membrane. In terms of biological role, putative boron transporter. Boron is essential for maintaining the integrity of plants cell walls. The polypeptide is Probable boron transporter 7 (BOR7) (Arabidopsis thaliana (Mouse-ear cress)).